The chain runs to 168 residues: ATP synthase F(1) complex subunit delta, mitochondrial (168 aa).

A mitochondrion-targeting transit peptide spans 1-22 (MLPSALLRRPGLGRLVRQVRLY). N6-acetyllysine; alternate occurs at positions 136 and 165. Residues lysine 136 and lysine 165 each carry the N6-succinyllysine; alternate modification.

This sequence belongs to the ATPase epsilon chain family. Component of the ATP synthase complex composed at least of ATP5F1A/subunit alpha, ATP5F1B/subunit beta, ATP5MC1/subunit c (homooctomer), MT-ATP6/subunit a, MT-ATP8/subunit 8, ATP5ME/subunit e, ATP5MF/subunit f, ATP5MG/subunit g, ATP5MK/subunit k, ATP5MJ/subunit j, ATP5F1C/subunit gamma, ATP5F1D/subunit delta, ATP5F1E/subunit epsilon, ATP5PF/subunit F6, ATP5PB/subunit b, ATP5PD/subunit d, ATP5PO/subunit OSCP. ATP synthase complex consists of a soluble F(1) head domain (subunits alpha(3) and beta(3)) - the catalytic core - and a membrane F(0) domain - the membrane proton channel (subunits c, a, 8, e, f, g, k and j). These two domains are linked by a central stalk (subunits gamma, delta, and epsilon) rotating inside the F1 region and a stationary peripheral stalk (subunits F6, b, d, and OSCP). Component of a complex composed at least by ATPIF1, ATP5F1A, ATP5F1B, ATP5F1C AND ATP5F1E.

The protein resides in the mitochondrion. The protein localises to the mitochondrion inner membrane. Subunit delta, of the mitochondrial membrane ATP synthase complex (F(1)F(0) ATP synthase or Complex V) that produces ATP from ADP in the presence of a proton gradient across the membrane which is generated by electron transport complexes of the respiratory chain. ATP synthase complex consist of a soluble F(1) head domain - the catalytic core - and a membrane F(1) domain - the membrane proton channel. These two domains are linked by a central stalk rotating inside the F(1) region and a stationary peripheral stalk. During catalysis, ATP synthesis in the catalytic domain of F(1) is coupled via a rotary mechanism of the central stalk subunits to proton translocation. In vivo, can only synthesize ATP although its ATP hydrolase activity can be activated artificially in vitro. With the central stalk subunit gamma, is essential for the biogenesis of F(1) catalytic part of the ATP synthase complex namely in the formation of F1 assembly intermediate. The protein is ATP synthase F(1) complex subunit delta, mitochondrial of Bos taurus (Bovine).